A 356-amino-acid polypeptide reads, in one-letter code: tRNA N6-adenosine threonylcarbamoyltransferase (356 aa).

Fe cation contacts are provided by histidine 115 and histidine 119. Residues 138 to 142, aspartate 171, glycine 184, and asparagine 277 each bind substrate; that span reads LVSGG. A Fe cation-binding site is contributed by aspartate 305.

Belongs to the KAE1 / TsaD family. It depends on Fe(2+) as a cofactor.

The protein resides in the cytoplasm. The enzyme catalyses L-threonylcarbamoyladenylate + adenosine(37) in tRNA = N(6)-L-threonylcarbamoyladenosine(37) in tRNA + AMP + H(+). Its function is as follows. Required for the formation of a threonylcarbamoyl group on adenosine at position 37 (t(6)A37) in tRNAs that read codons beginning with adenine. Is involved in the transfer of the threonylcarbamoyl moiety of threonylcarbamoyl-AMP (TC-AMP) to the N6 group of A37, together with TsaE and TsaB. TsaD likely plays a direct catalytic role in this reaction. This is tRNA N6-adenosine threonylcarbamoyltransferase from Polaromonas naphthalenivorans (strain CJ2).